The sequence spans 813 residues: Protein mac-1 (813 aa).

Coiled coils occupy residues 58 to 89 (VREA…VQEI) and 122 to 152 (SDDS…TVLN). 2 disordered regions span residues 97-131 (TRKR…ERAA) and 152-193 (NLYT…GAVS). Over residues 158–172 (SAPSTPVSTPKNQAT) the composition is skewed to polar residues. Residues 175 to 191 (PPGASAAPPALPRGLGA) are compositionally biased toward low complexity. Residues 246-253 (GPPGCGKT) and 575-582 (GPPGCGKT) contribute to the ATP site.

This sequence belongs to the AAA ATPase family. In terms of assembly, found in a complex composed of ced-3, ced-4 and mac-1 or of ced-9, ced-4 and mac-1. Within the complex, interacts with ced-4.

In terms of biological role, probably together with ced-9, plays a modest role in preventing ced-4 and caspase ced-3-mediated apoptosis. The polypeptide is Protein mac-1 (Caenorhabditis elegans).